A 221-amino-acid polypeptide reads, in one-letter code: Translation initiation factor 6 (221 aa).

The protein belongs to the eIF-6 family.

In terms of biological role, binds to the 50S ribosomal subunit and prevents its association with the 30S ribosomal subunit to form the 70S initiation complex. This Methanosphaerula palustris (strain ATCC BAA-1556 / DSM 19958 / E1-9c) protein is Translation initiation factor 6.